A 154-amino-acid chain; its full sequence is Large ribosomal subunit protein uL13 (154 aa).

This sequence belongs to the universal ribosomal protein uL13 family. As to quaternary structure, part of the 50S ribosomal subunit.

In terms of biological role, this protein is one of the early assembly proteins of the 50S ribosomal subunit, although it is not seen to bind rRNA by itself. It is important during the early stages of 50S assembly. This is Large ribosomal subunit protein uL13 from Rhodopseudomonas palustris (strain BisB5).